The primary structure comprises 228 residues: MHEFLKAFKDAFPHTISILLGYLLMGMTFGMLLVQQGYDYKVALFMSLFIYAGAVQFVAITLLSAQASLMNVVIVSLLVNARQTCYALSMLDRFKNTKWRLPYLAHALTDETFALLNLYAPKEGVSEKDFIFSISLLNHSYWIFGSLVGSLVGSHFSFDTQGMEFVMTAIFIVLFMEQYKRTTNHKNAWLGIVIAVVCLALFGTEYFLLIALVLMVLALMLFRKQLEC.

5 consecutive transmembrane segments (helical) span residues 14–34, 42–62, 130–150, 156–176, and 192–212; these read HTIS…MLLV, VALF…AITL, FIFS…LVGS, FSFD…VLFM, and IVIA…LIAL.

It belongs to the AzlC family.

Its subcellular location is the cell membrane. This is an uncharacterized protein from Helicobacter pylori (strain ATCC 700392 / 26695) (Campylobacter pylori).